The following is a 405-amino-acid chain: Accessory Sec system protein translocase subunit SecY2 (405 aa).

Transmembrane regions (helical) follow at residues L14–V34, L63–F83, M104–V124, I131–L151, A156–P176, G191–Y211, M247–F267, P285–V305, F343–L363, and L368–I388.

It belongs to the SecY/SEC61-alpha family. SecY2 subfamily. Component of the accessory SecA2/SecY2 protein translocase complex required to export cell wall proteins. May form heterotrimers with SecE and SecG subunits.

The protein resides in the cell membrane. Part of the accessory SecA2/SecY2 system specifically required for export of possible cell wall proteins. The central subunit of a protein translocation channel. This is Accessory Sec system protein translocase subunit SecY2 from Streptococcus pneumoniae (strain CGSP14).